Here is a 57-residue protein sequence, read N- to C-terminus: Large ribosomal subunit protein bL32A (57 aa).

The disordered stretch occupies residues 1 to 22 (MAVPARRTSKTKKRLRRTHEKL). Over residues 7–20 (RTSKTKKRLRRTHE) the composition is skewed to basic residues.

The protein belongs to the bacterial ribosomal protein bL32 family.

This Enterococcus faecalis (strain ATCC 700802 / V583) protein is Large ribosomal subunit protein bL32A (rpmF1).